The following is a 143-amino-acid chain: Large ribosomal subunit protein uL15 (143 aa).

The interval 20 to 52 (GRGIGSGKGKTAGRGHKGQHSRAGGYHKVGFEG) is disordered. A compositionally biased stretch (basic residues) spans 30–39 (TAGRGHKGQH).

The protein belongs to the universal ribosomal protein uL15 family. As to quaternary structure, part of the 50S ribosomal subunit.

Functionally, binds to the 23S rRNA. The chain is Large ribosomal subunit protein uL15 from Coxiella burnetii (strain CbuK_Q154) (Coxiella burnetii (strain Q154)).